A 716-amino-acid polypeptide reads, in one-letter code: MVKLTACLLLLVAAVQAKLPVTPISQLRAESHRNKALVARSQDVNAAFPAHTIQIPIDHFPKSSRYEPHTTEKFNLRYWFDASHYKEGGPVIILHGGETSGEGRIPFLQKGILAQLAQATNGIGVIMEHRYYGGSLPTPDFSNKSLRFLTTEQALADTAYFSKNIKFPGLEKYNLTAPGTAHILYGGSYAGGQVAFLRTQYPDIFWGAISSSGVTKAIYDYWQYFEPIRQEAPQDCVHVTQNFVDIVDNIIINGKNANTTRELKNLFGLGRLRDADFANALSSGITGWQSTNWDPAISGKSFYQYCGEITSDRYLYPVTAQQKASAKRIIEAGGHGREAPEILPQLLNFVGWLNKSTLESCSGQGQTAEECLNSYDEAFYKQDNADQSWRAWPWQYCNEWGYLQTGSGAPKNIRPVISRLIDLPYTSNICKQAFGITKPSNVDLVNKYGAFDIEYDRLAFVDGGSDPWKEAGVHATAARKRGTSTNKPFILIPDAVHHWDENGLYPNETTAELPPQRIKEVQAEEARFVKEWMKVHIYIDHQTFTGIRKNLSLMNDELPAHVLPFLVPPTSTKNAVSPSHEQPADPRIAISSWACAGLSVVVARICCSPIGYRCPSRDLAAQPSKSKKDRRGQQLSPAAGDPIVCTGLTTRLGFVSFLVFAFSSFTFIPDIETLKAAVLRSGEVLWSHDAAAECCCVLSVLFAASCTESRKLRLDI.

An N-terminal signal peptide occupies residues 1–17; that stretch reads MVKLTACLLLLVAAVQA. N-linked (GlcNAc...) asparagine glycosylation is found at Asn143 and Asn174. The active-site Charge relay system is the Ser188. 2 N-linked (GlcNAc...) asparagine glycosylation sites follow: Asn258 and Asn354. Asp466 functions as the Charge relay system in the catalytic mechanism. Residues Asn507 and Asn550 are each glycosylated (N-linked (GlcNAc...) asparagine). Positions 617-636 are disordered; that stretch reads RDLAAQPSKSKKDRRGQQLS. Residues 652–672 traverse the membrane as a helical segment; sequence LGFVSFLVFAFSSFTFIPDIE.

It belongs to the peptidase S28 family.

Its subcellular location is the membrane. It localises to the secreted. This Arthroderma benhamiae (strain ATCC MYA-4681 / CBS 112371) (Trichophyton mentagrophytes) protein is Probable extracellular serine carboxypeptidase.